Consider the following 581-residue polypeptide: Ras-specific guanine nucleotide-releasing factor RalGPS1 (581 aa).

The disordered stretch occupies residues 1–31 (MYRRNGLPASVSITSRNTQDSSSSESLDGRS). Positions 49 to 288 (TPEEFASQIT…YSLSLKIEPG (240 aa)) constitute a Ras-GEF domain. The segment at 320-339 (PDTSVVAHLPTPPPARHRKS) is disordered. The PXXP motif lies at 329–332 (PTPP). The region spanning 455–567 (SITIEGPLRR…WHRHLAEACR (113 aa)) is the PH domain.

It is found in the cytoplasm. It localises to the cell membrane. Functionally, guanine nucleotide exchange factor. May be involved in cytoskeletal organization. In Danio rerio (Zebrafish), this protein is Ras-specific guanine nucleotide-releasing factor RalGPS1 (ralgps1).